The following is a 136-amino-acid chain: Large ribosomal subunit protein uL16 (136 aa).

The protein belongs to the universal ribosomal protein uL16 family. Part of the 50S ribosomal subunit.

Functionally, binds 23S rRNA and is also seen to make contacts with the A and possibly P site tRNAs. The sequence is that of Large ribosomal subunit protein uL16 from Salmonella agona (strain SL483).